The chain runs to 108 residues: DNA-directed RNA polymerase III subunit RPC10 (108 aa).

Zn(2+)-binding residues include Cys5, Cys8, Cys25, Cys28, Cys69, and Cys72. The C4-type zinc finger occupies 5-28 (CPGCGNGLIVEEGQRCHRFACNTC). The TFIIS-type zinc-finger motif lies at 65-107 (TAESCPKCEHPRAYFMQLQTRSADEPMTTFYKCCNAQCGHRWR). The short motif at 88-89 (DE) is the Hairpin element. 2 residues coordinate Zn(2+): Cys98 and Cys102.

The protein belongs to the archaeal RpoM/eukaryotic RPA12/RPB9/RPC11 RNA polymerase family. As to quaternary structure, component of the RNA polymerase III complex consisting of 17 subunits: a ten-subunit horseshoe-shaped catalytic core composed of POLR3A/RPC1, POLR3B/RPC2, POLR1C/RPAC1, POLR1D/RPAC2, POLR3K/RPC10, POLR2E/RPABC1, POLR2F/RPABC2, POLR2H/RPABC3, POLR2K/RPABC4 and POLR2L/RPABC5; a mobile stalk composed of two subunits POLR3H/RPC8 and CRCP/RPC9, protruding from the core and functioning primarily in transcription initiation; and additional subunits homologous to general transcription factors of the RNA polymerase II machinery, POLR3C/RPC3-POLR3F/RPC6-POLR3G/RPC7 heterotrimer required for transcription initiation and POLR3D/RPC4-POLR3E/RPC5 heterodimer involved in both transcription initiation and termination.

It localises to the nucleus. In terms of biological role, core component of RNA polymerase III (Pol III) which synthesizes small non-coding RNAs using the four ribonucleoside triphosphates as substrates. Can mediate Pol I proofreading of the nascent RNA transcript. Anchors into the Pol III active site to constantly monitor transcription fidelity, cleaves mis-incorporated 5'-ribonucleotides and restarts the transcription process. Once Pol III reaches the poly(dT) termination signal, can induce Pol III clamp opening and transcription termination. Pol III plays an important role in sensing and limiting infection by intracellular bacteria and DNA viruses. Acts as a nuclear and cytosolic DNA sensor involved in innate immune response. Can sense non-self dsDNA that serves as template for transcription into dsRNA. The non-self RNA polymerase III transcripts, such as Epstein-Barr virus-encoded RNAs (EBERs) induce type I interferon and NF-kappa-B through the RIG-I pathway. The protein is DNA-directed RNA polymerase III subunit RPC10 of Homo sapiens (Human).